The following is a 559-amino-acid chain: Glypican-1 (559 aa).

An N-terminal signal peptide occupies residues 1 to 23; the sequence is MELRARGWWLLYAAAVLVACARG. 7 disulfides stabilise this stretch: Cys32–Cys68, Cys62–Cys256, Cys69–Cys259, Cys191–Cys343, Cys246–Cys279, Cys268–Cys415, and Cys272–Cys401. Residues Asn79 and Asn116 are each glycosylated (N-linked (GlcNAc...) asparagine). The disordered stretch occupies residues 478 to 539; the sequence is FQDASDDGSG…SAAAPTPPQA (62 aa). Ser486, Ser488, and Ser490 each carry an O-linked (Xyl...) (heparan sulfate) serine glycan. A lipid anchor (GPI-anchor amidated serine) is attached at Ser530. A propeptide spans 531–559 (removed in mature form); the sequence is AAAPTPPQASPLLLLGLALALPAVAPRGR.

It belongs to the glypican family. Post-translationally, S-nitrosylated in a Cu(2+)-dependent manner. Nitric acid (NO) is released from the nitrosylated cysteines by ascorbate or by some other reducing agent, in a Cu(2+) or Zn(2+) dependent manner. This free nitric oxide is then capable of cleaving the heparan sulfate side chains. In terms of processing, N- and O-glycosylated. N-glycosylation is mainly of the complex type containing sialic acid. O-glycosylated with heparan sulfate. The heparan sulfate chains can be cleaved either by the action of heparanase or, degraded by a deaminative process that uses nitric oxide (NO) released from the S-nitrosylated cysteines. This process is triggered by ascorbate, or by some other reducing agent, in a Cu(2+)- or Zn(2+) dependent manner. Cu(2+) ions are provided by ceruloproteins such as APP, PRNP or CP which associate with GCP1 in intracellular compartments or lipid rafts. Shed from the cell surface probably by further cleavage.

The protein localises to the cell membrane. Its subcellular location is the endosome. The protein resides in the secreted. It localises to the extracellular space. Cell surface proteoglycan that bears heparan sulfate. Binds, via the heparan sulfate side chains, alpha-4 (V) collagen and participates in Schwann cell myelination. May act as a catalyst in increasing the rate of conversion of prion protein PRPN (C) to PRNP (Sc) via associating (via the heparan sulfate side chains) with both forms of PRPN, targeting them to lipid rafts and facilitating their interaction. Required for proper skeletal muscle differentiation by sequestering FGF2 in lipid rafts preventing its binding to receptors (FGFRs) and inhibiting the FGF-mediated signaling. In Bos taurus (Bovine), this protein is Glypican-1 (GPC1).